A 247-amino-acid chain; its full sequence is Ribonuclease PH (247 aa).

Residues Arg96 and 134-136 contribute to the phosphate site; that span reads GTR.

This sequence belongs to the RNase PH family. As to quaternary structure, homohexameric ring arranged as a trimer of dimers.

The enzyme catalyses tRNA(n+1) + phosphate = tRNA(n) + a ribonucleoside 5'-diphosphate. Phosphorolytic 3'-5' exoribonuclease that plays an important role in tRNA 3'-end maturation. Removes nucleotide residues following the 3'-CCA terminus of tRNAs; can also add nucleotides to the ends of RNA molecules by using nucleoside diphosphates as substrates, but this may not be physiologically important. Probably plays a role in initiation of 16S rRNA degradation (leading to ribosome degradation) during starvation. The polypeptide is Ribonuclease PH (Tropheryma whipplei (strain TW08/27) (Whipple's bacillus)).